We begin with the raw amino-acid sequence, 204 residues long: ATP phosphoribosyltransferase (204 aa).

It belongs to the ATP phosphoribosyltransferase family. Short subfamily. Heteromultimer composed of HisG and HisZ subunits.

The protein localises to the cytoplasm. The enzyme catalyses 1-(5-phospho-beta-D-ribosyl)-ATP + diphosphate = 5-phospho-alpha-D-ribose 1-diphosphate + ATP. The protein operates within amino-acid biosynthesis; L-histidine biosynthesis; L-histidine from 5-phospho-alpha-D-ribose 1-diphosphate: step 1/9. In terms of biological role, catalyzes the condensation of ATP and 5-phosphoribose 1-diphosphate to form N'-(5'-phosphoribosyl)-ATP (PR-ATP). Has a crucial role in the pathway because the rate of histidine biosynthesis seems to be controlled primarily by regulation of HisG enzymatic activity. This is ATP phosphoribosyltransferase from Campylobacter concisus (strain 13826).